Here is a 144-residue protein sequence, read N- to C-terminus: Methylglyoxal synthase (144 aa).

An MGS-like domain is found at 1 to 144 (MKIALIAHDE…KSGEEKETER (144 aa)). Residues His-8, Lys-12, 34–37 (TGTT), and 54–55 (SG) contribute to the substrate site. The Proton donor/acceptor role is filled by Asp-60. His-87 contributes to the substrate binding site.

Belongs to the methylglyoxal synthase family.

It carries out the reaction dihydroxyacetone phosphate = methylglyoxal + phosphate. Its function is as follows. Catalyzes the formation of methylglyoxal from dihydroxyacetone phosphate. In Geobacillus thermodenitrificans (strain NG80-2), this protein is Methylglyoxal synthase.